Reading from the N-terminus, the 1055-residue chain is MDS1 and EVI1 complex locus protein EVI1-A (1055 aa).

3 C2H2-type zinc fingers span residues 21-48 (YRCE…VTPH), 75-97 (HECK…LLSH), and 103-125 (YKCD…QMSH). The C2H2-type 4; degenerate zinc-finger motif lies at 131-155 (YECENCSKQVFTDPSNLQRHIRSQH). 2 consecutive C2H2-type zinc fingers follow at residues 161–183 (HACS…KHIH) and 189–211 (FVCE…KRMH). The C2H2-type 7; atypical zinc-finger motif lies at 218 to 240 (IKCKDCGQMFSTTSSLNKHRRFC). 3 disordered regions span residues 324 to 345 (PVKG…VNQP), 372 to 423 (FITE…SDKD), and 531 to 621 (VPLK…PELP). Positions 332-345 (EQSSKSQSPHVNQP) are enriched in polar residues. A compositionally biased stretch (basic and acidic residues) spans 381–392 (RPHEKISDHSES). Polar residues predominate over residues 399 to 413 (STPSGSDLETTSGSD). Positions 422–435 (KDKLKENGKLYKDK) match the Nuclear localization signal motif. Over residues 531-566 (VPLKIEPESPKETKKVQKGKTESPFDLTTKRKEEKA) the composition is skewed to basic and acidic residues. The CTBP-binding motif 1 motif lies at 554–558 (PFDLT). Residues 569–583 (NVPSKSGAPTSSNHD) show a composition bias toward polar residues. Residues 585–589 (PLDLS) carry the CTBP-binding motif 2 motif. Polar residues predominate over residues 591–601 (GSRSRAATTKQ). A compositionally biased stretch (basic and acidic residues) spans 602–621 (TEPRKNHIFNEKKDMDPELP). C2H2-type zinc fingers lie at residues 734 to 756 (YTCR…LRTH), 762 to 785 (YRCK…RNIH), and 791 to 813 (FKCH…LKKH). Disordered regions lie at residues 813–837 (HENG…GPIL) and 922–957 (SVDE…EDFK). The segment covering 816–827 (GNLSGTAASSPH) has biased composition (polar residues). Residues 944–954 (DDEDDDDDEEE) show a composition bias toward acidic residues.

In terms of assembly, homooligomer. Interacts with ctbp. Expressed dynamically during embryonic development; in the developing pronephros, specific areas of the brain (forebrain, midbrain and hindbrain), and in the majority of the visceral arch, and head mesenchyme derived from neural crest cells. Within the pronephros, expressed in the ventroposterior region of the pronephros anlagen from stage 20 (and is absent from the splanchnic layer that forms the glomus), then expression becomes restricted to the distal tubule and duct by the tadpole stage. In adults, expressed in various tissues including kidney, lung, testis, spleen and stomach.

Its subcellular location is the nucleus. It localises to the nucleus speckle. In terms of biological role, transcriptional repressor during pronephros development. Plays a role in regionalization of the pronephros; may promote formation of the distal tubule and duct over formation of the glomus and proximal tubule. The sequence is that of MDS1 and EVI1 complex locus protein EVI1-A (mecom-a) from Xenopus laevis (African clawed frog).